The following is a 465-amino-acid chain: MATNVGGAVDNSRRSISDNRHDPEKPAELPDTLSGSETERPQDANPEAALDQQASDAAKAHDEGPPDGGTAAWMVVLGAWCCSFCSPGWINSMGSFQEYYQREPLKDYSSSEIAWIPSLEIFFLFGLGPIVGIIFDRYGPRPLIIGGTIFHVFGLMMASLAKTYYQFLLSQGVCSAIGVACLYSPALACISTWFLKRRGAAMGIMATGSSVGGVIFPIMITRMIERNGYPWALRTAAFLILGLQVIACLTVRPRQKPVPKKLPAGRLAAPFTEPAFALLLAGIFILTYGMYIPIDYLPLSGLQEAHMSVNMSQYLVAIMNAASLFGRLGAGYGADIIGRWNMFIIACGVTGISNLAVWIPATKSSITIGYAIMFGFASGAFVSLVGALPVSVSPIPELGYRMGIVFLVISIPALTMAPIGGAILQHASNGWVSLKVFAGVMCLVGSAIILGSRMLYTEKRLIKAF.

The disordered stretch occupies residues 1 to 66 (MATNVGGAVD…AAKAHDEGPP (66 aa)). The span at 11–28 (NSRRSISDNRHDPEKPAE) shows a compositional bias: basic and acidic residues. Helical transmembrane passes span 70–90 (TAAW…PGWI), 115–135 (WIPS…GIIF), 142–162 (PLII…SLAK), 175–195 (SAIG…TWFL), 200–220 (AAMG…PIMI), 231–251 (WALR…CLTV), and 274–294 (PAFA…YIPI). Asn310 is a glycosylation site (N-linked (GlcNAc...) asparagine). A run of 5 helical transmembrane segments spans residues 314–334 (YLVA…GYGA), 342–362 (MFII…IPAT), 368–388 (IGYA…VGAL), 404–424 (IVFL…GAIL), and 430–450 (GWVS…AIIL).

It belongs to the major facilitator superfamily. Monocarboxylate porter (TC 2.A.1.13) family.

It is found in the cell membrane. Functionally, efflux pump that may be involved in the secretion of fujikurins. This Gibberella fujikuroi (strain CBS 195.34 / IMI 58289 / NRRL A-6831) (Bakanae and foot rot disease fungus) protein is Fujikurins efflux protein FFUJ_12242.